The sequence spans 1210 residues: Epidermal growth factor receptor (1210 aa).

Positions Met1–Ala24 are cleaved as a signal peptide. The Extracellular portion of the chain corresponds to Leu25–Ser645. A disulfide bridge connects residues Cys31 and Cys58. An N-linked (GlcNAc...) (complex) asparagine; atypical; partial glycan is attached at Asn56. The N-linked (GlcNAc...) asparagine; atypical glycan is linked to Asn73. An Approximate repeat occupies Asp75–Val300. Asn128, Asn175, and Asn196 each carry an N-linked (GlcNAc...) asparagine glycan. 13 cysteine pairs are disulfide-bonded: Cys157/Cys187, Cys190/Cys199, Cys194/Cys207, Cys215/Cys223, Cys219/Cys231, Cys232/Cys240, Cys236/Cys248, Cys251/Cys260, Cys264/Cys291, Cys295/Cys307, Cys311/Cys326, Cys329/Cys333, and Cys337/Cys362. Ser229 carries the post-translational modification Phosphoserine. Residues Asn352, Asn361, Asn413, and Asn444 are each glycosylated (N-linked (GlcNAc...) asparagine). One copy of the Approximate repeat lies at Gln390–Met600. Cystine bridges form between Cys470-Cys499, Cys506-Cys515, Cys510-Cys523, Cys526-Cys535, Cys539-Cys555, Cys558-Cys571, Cys562-Cys579, Cys582-Cys591, Cys595-Cys617, Cys620-Cys628, and Cys624-Cys636. The N-linked (GlcNAc...) asparagine glycan is linked to Asn528. Asn568 carries N-linked (GlcNAc...) asparagine; partial glycosylation. N-linked (GlcNAc...) asparagine; partial glycosylation is present at Asn603. An N-linked (GlcNAc...) (high mannose) asparagine glycan is attached at Asn623. A helical membrane pass occupies residues Ile646 to Met668. At Arg669–Ala1210 the chain is on the cytoplasmic side. Thr678 is subject to Phosphothreonine; by PKC and PKD/PRKD1. An important for dimerization, phosphorylation and activation region spans residues Leu688 to Leu704. Thr693 is modified (phosphothreonine; by PKD/PRKD1). At Ser695 the chain carries Phosphoserine. The Protein kinase domain maps to Phe712–Leu979. Lys716 participates in a covalent cross-link: Glycyl lysine isopeptide (Lys-Gly) (interchain with G-Cter in ubiquitin). Residue Leu718–Val726 coordinates ATP. Lys737 is covalently cross-linked (Glycyl lysine isopeptide (Lys-Gly) (interchain with G-Cter in ubiquitin)). Residue Lys745 coordinates ATP. Position 745 is an N6-(2-hydroxyisobutyryl)lysine (Lys745). Glycyl lysine isopeptide (Lys-Gly) (interchain with G-Cter in ubiquitin) cross-links involve residues Lys754 and Lys757. Thr790–Gln791 serves as a coordination point for ATP. The active-site Proton acceptor is the Asp837. ATP is bound at residue Asp855. A Glycyl lysine isopeptide (Lys-Gly) (interchain with G-Cter in ubiquitin) cross-link involves residue Lys867. Tyr869 is subject to Phosphotyrosine. Residues Lys929, Lys960, and Lys970 each participate in a glycyl lysine isopeptide (Lys-Gly) (interchain with G-Cter in ubiquitin) cross-link. Residues Ser991 and Ser995 each carry the phosphoserine modification. Phosphotyrosine; by autocatalysis is present on residues Tyr998 and Tyr1016. A phosphoserine mark is found at Ser1026 and Ser1039. Thr1041 carries the phosphothreonine modification. At Ser1042 the chain carries Phosphoserine. Cys1049 carries S-palmitoyl cysteine lipidation. At Ser1064 the chain carries Phosphoserine. Tyr1069 carries the post-translational modification Phosphotyrosine. 3 positions are modified to phosphoserine: Ser1070, Ser1071, and Ser1081. Phosphotyrosine; by autocatalysis is present on residues Tyr1092 and Tyr1110. The disordered stretch occupies residues Val1097–Glu1137. Polar residues-rich tracts occupy residues Ser1104–Leu1115 and Pro1128–Glu1137. Cys1146 carries S-palmitoyl cysteine lipidation. Ser1166 is modified (phosphoserine). A phosphotyrosine; by autocatalysis mark is found at Tyr1172 and Tyr1197. Arg1199 is modified (omega-N-methylarginine).

Belongs to the protein kinase superfamily. Tyr protein kinase family. EGF receptor subfamily. As to quaternary structure, binding of the ligand triggers homo- and/or heterodimerization of the receptor triggering its autophosphorylation. Heterodimer with ERBB2. Forms a complex with CCDC88A/GIV (via SH2-like regions) and GNAI3 which leads to enhanced EGFR signaling and triggering of cell migration; binding to CCDC88A requires autophosphorylation of the EGFR C-terminal region, and ligand stimulation is required for recruitment of GNAI3 to the complex. Interacts with ERRFI1; inhibits dimerization of the kinase domain and autophosphorylation. Part of a complex with ERBB2 and either PIK3C2A or PIK3C2B. Interacts with GRB2; an adapter protein coupling the receptor to downstream signaling pathways. Interacts with GAB2; involved in signaling downstream of EGFR. Interacts with STAT3; mediates EGFR downstream signaling in cell proliferation. Interacts with RIPK1; involved in NF-kappa-B activation. Interacts (autophosphorylated) with CBL, CBLB and CBLC; involved in EGFR ubiquitination and regulation; interaction with CBL is reduced in the presence of tensin TNS4. Interacts with SOCS5; regulates EGFR degradation through ELOC- and ELOB-mediated ubiquitination and proteasomal degradation. Interacts with PRMT5; methylates EGFR and enhances interaction with PTPN6. Interacts (phosphorylated) with PTPN6; inhibits EGFR-dependent activation of MAPK/ERK. Interacts with COPG1; essential for regulation of EGF-dependent nuclear transport of EGFR by retrograde trafficking from the Golgi to the ER. Interacts with TNK2; this interaction is dependent on EGF stimulation and kinase activity of EGFR. Interacts with PCNA; positively regulates PCNA. Interacts with PELP1. Interacts with MUC1. Interacts with AP2M1. Interacts with FER. May interact with EPS8; mediates EPS8 phosphorylation. Interacts (via SH2 domains) with GRB2, NCK1 and NCK2. Interacts with ATXN2. Interacts with GAREM1. Interacts (ubiquitinated) with ANKRD13A/B/D; the interaction is direct and may regulate EGFR internalization after EGF stimulation. Interacts with GPER1; the interaction occurs in an estrogen-dependent manner. Interacts (via C-terminal cytoplasmic kinase domain) with ZPR1 (via zinc fingers). Interacts with RNF115 and RNF126. Interacts with GPRC5A (via its transmembrane domain). Interacts with FAM83B; positively regulates EGFR inducing its autophosphorylation in absence of stimulation by EGF. Interacts with LAPTM4B; positively correlates with EGFR activation. Interacts with STX19. Interacts with CD44. Interacts with PGRMC1; the interaction requires PGRMC1 homodimerization. Interacts with PIKFYVE. Interacts with NEU3. Interacts with TRAF4. Interacts with the ant venom OMEGA-myrmeciitoxin(02)-Mg1a. Interacts with CD82; this interaction facilitates ligand-induced endocytosis of the receptor and its subsequent desensitization. In terms of processing, phosphorylated on Tyr residues in response to EGF. Phosphorylation at Ser-695 is partial and occurs only if Thr-693 is phosphorylated. Phosphorylation at Thr-678 and Thr-693 by PRKD1 inhibits EGF-induced MAPK8/JNK1 activation. Dephosphorylation by PTPRJ prevents endocytosis and stabilizes the receptor at the plasma membrane. Autophosphorylation at Tyr-1197 is stimulated by methylation at Arg-1199 and enhances interaction with PTPN6. Autophosphorylation at Tyr-1092 and/or Tyr-1110 recruits STAT3. Dephosphorylated by PTPN1 and PTPN2. Monoubiquitinated and polyubiquitinated upon EGF stimulation; which does not affect tyrosine kinase activity or signaling capacity but may play a role in lysosomal targeting. Polyubiquitin linkage is mainly through 'Lys-63', but linkage through 'Lys-48', 'Lys-11' and 'Lys-29' also occurs. Deubiquitination by OTUD7B prevents degradation. Ubiquitinated by RNF115 and RNF126. Ubiquitinated by ZNRF1 or CBL at different lysines in response to EGF stimulation; leading to recruitment of the ESCRT machinery and subsequent degradation in the lysosomes. Deubiquitinated by UCHL1 leading to the inhibition of its degradation. Post-translationally, palmitoylated on Cys residues by ZDHHC20. Palmitoylation inhibits internalization after ligand binding, and increases the persistence of tyrosine-phosphorylated EGFR at the cell membrane. Palmitoylation increases the amplitude and duration of EGFR signaling. In terms of processing, methylated. Methylation at Arg-1199 by PRMT5 stimulates phosphorylation at Tyr-1197. As to expression, ubiquitously expressed. Isoform 2 is also expressed in ovarian cancers.

It is found in the cell membrane. The protein localises to the endoplasmic reticulum membrane. Its subcellular location is the golgi apparatus membrane. It localises to the nucleus membrane. The protein resides in the endosome. It is found in the endosome membrane. The protein localises to the nucleus. Its subcellular location is the secreted. The enzyme catalyses L-tyrosyl-[protein] + ATP = O-phospho-L-tyrosyl-[protein] + ADP + H(+). Its activity is regulated as follows. Endocytosis and inhibition of the activated EGFR by phosphatases like PTPRJ and PTPRK constitute immediate regulatory mechanisms. Upon EGF-binding phosphorylates EPS15 that regulates EGFR endocytosis and activity. Moreover, inducible feedback inhibitors including LRIG1, SOCS4, SOCS5 and ERRFI1 constitute alternative regulatory mechanisms for the EGFR signaling. Up-regulated by NEU3-mediated desialylation of N-linked glycan at Asn-528. Receptor tyrosine kinase binding ligands of the EGF family and activating several signaling cascades to convert extracellular cues into appropriate cellular responses. Known ligands include EGF, TGFA/TGF-alpha, AREG, epigen/EPGN, BTC/betacellulin, epiregulin/EREG and HBEGF/heparin-binding EGF. Ligand binding triggers receptor homo- and/or heterodimerization and autophosphorylation on key cytoplasmic residues. The phosphorylated receptor recruits adapter proteins like GRB2 which in turn activates complex downstream signaling cascades. Activates at least 4 major downstream signaling cascades including the RAS-RAF-MEK-ERK, PI3 kinase-AKT, PLCgamma-PKC and STATs modules. May also activate the NF-kappa-B signaling cascade. Also directly phosphorylates other proteins like RGS16, activating its GTPase activity and probably coupling the EGF receptor signaling to the G protein-coupled receptor signaling. Also phosphorylates MUC1 and increases its interaction with SRC and CTNNB1/beta-catenin. Positively regulates cell migration via interaction with CCDC88A/GIV which retains EGFR at the cell membrane following ligand stimulation, promoting EGFR signaling which triggers cell migration. Plays a role in enhancing learning and memory performance. Plays a role in mammalian pain signaling (long-lasting hypersensitivity). Its function is as follows. Isoform 2 may act as an antagonist of EGF action. In terms of biological role, (Microbial infection) Acts as a receptor for hepatitis C virus (HCV) in hepatocytes and facilitates its cell entry. Mediates HCV entry by promoting the formation of the CD81-CLDN1 receptor complexes that are essential for HCV entry and by enhancing membrane fusion of cells expressing HCV envelope glycoproteins. This is Epidermal growth factor receptor from Homo sapiens (Human).